Consider the following 351-residue polypeptide: Type II restriction enzyme NmeDI (351 aa).

It carries out the reaction Endonucleolytic cleavage of DNA to give specific double-stranded fragments with terminal 5'-phosphates.. In terms of biological role, a P subtype restriction enzyme that recognizes the double-stranded sequence 5'-N(12)RCCGGYN(12)-3' and cleaves on both sides of the recognition sequence. The chain is Type II restriction enzyme NmeDI (nmeDIRP) from Neisseria meningitidis serogroup C.